A 500-amino-acid polypeptide reads, in one-letter code: Probable transcription factor FPSE_09189 (500 aa).

Disordered regions lie at residues 161–197 (MVRH…PSLA) and 457–500 (IRTG…TQLE). Residues 459-474 (TGHEDSSRDGGRENKA) show a composition bias toward basic and acidic residues. The segment covering 475-484 (MNRNRSTGNS) has biased composition (polar residues).

The protein localises to the nucleus. Functionally, the two putative transcription factors FPSE_09188 and FPSE_09189 could be responsible for orchestrating expression of the W493 A and B biosynthesis cluster genes. W493 A and B consist of six amino acid residues D-allo-thr, L-Ala, D-Ala, L-Gln, D-Tyr, and L-Val/L-Ile linked to a 3-hydroxy-4-methyltetradecanoic acid polyketide chain. The chain is Probable transcription factor FPSE_09189 from Fusarium pseudograminearum (strain CS3096) (Wheat and barley crown-rot fungus).